The following is a 229-amino-acid chain: Uracil-DNA glycosylase (229 aa).

Residue aspartate 64 is the Proton acceptor of the active site.

It belongs to the uracil-DNA glycosylase (UDG) superfamily. UNG family.

It is found in the cytoplasm. The enzyme catalyses Hydrolyzes single-stranded DNA or mismatched double-stranded DNA and polynucleotides, releasing free uracil.. Its function is as follows. Excises uracil residues from the DNA which can arise as a result of misincorporation of dUMP residues by DNA polymerase or due to deamination of cytosine. The polypeptide is Uracil-DNA glycosylase (Klebsiella pneumoniae subsp. pneumoniae (strain ATCC 700721 / MGH 78578)).